The sequence spans 1475 residues: Protein STU1 (1475 aa).

Disordered stretches follow at residues 870–913 (REST…EPDL) and 1113–1134 (DGES…NRPA). Over residues 887–896 (DGAHGGDARD) the composition is skewed to basic and acidic residues.

The protein belongs to the CLASP family. As to quaternary structure, interacts with microtubules.

It localises to the cytoplasm. The protein resides in the cytoskeleton. It is found in the nucleus. The protein localises to the spindle. In terms of biological role, microtubule binding protein that promotes the stabilization of dynamic microtubules. Required for mitotic spindle formation. This Eremothecium gossypii (strain ATCC 10895 / CBS 109.51 / FGSC 9923 / NRRL Y-1056) (Yeast) protein is Protein STU1 (STU1).